The following is a 337-amino-acid chain: Phenylalanine--tRNA ligase alpha subunit (337 aa).

Glu252 contributes to the Mg(2+) binding site.

It belongs to the class-II aminoacyl-tRNA synthetase family. Phe-tRNA synthetase alpha subunit type 1 subfamily. Tetramer of two alpha and two beta subunits. The cofactor is Mg(2+).

Its subcellular location is the cytoplasm. It catalyses the reaction tRNA(Phe) + L-phenylalanine + ATP = L-phenylalanyl-tRNA(Phe) + AMP + diphosphate + H(+). In Francisella philomiragia subsp. philomiragia (strain ATCC 25017 / CCUG 19701 / FSC 153 / O#319-036), this protein is Phenylalanine--tRNA ligase alpha subunit.